A 168-amino-acid chain; its full sequence is ATP synthase subunit b (168 aa).

Residues Ala-9 to Leu-29 form a helical membrane-spanning segment.

The protein belongs to the ATPase B chain family. In terms of assembly, F-type ATPases have 2 components, F(1) - the catalytic core - and F(0) - the membrane proton channel. F(1) has five subunits: alpha(3), beta(3), gamma(1), delta(1), epsilon(1). F(0) has three main subunits: a(1), b(2) and c(10-14). The alpha and beta chains form an alternating ring which encloses part of the gamma chain. F(1) is attached to F(0) by a central stalk formed by the gamma and epsilon chains, while a peripheral stalk is formed by the delta and b chains.

Its subcellular location is the cell membrane. F(1)F(0) ATP synthase produces ATP from ADP in the presence of a proton or sodium gradient. F-type ATPases consist of two structural domains, F(1) containing the extramembraneous catalytic core and F(0) containing the membrane proton channel, linked together by a central stalk and a peripheral stalk. During catalysis, ATP synthesis in the catalytic domain of F(1) is coupled via a rotary mechanism of the central stalk subunits to proton translocation. In terms of biological role, component of the F(0) channel, it forms part of the peripheral stalk, linking F(1) to F(0). This chain is ATP synthase subunit b, found in Bacillus cereus (strain G9842).